An 80-amino-acid chain; its full sequence is Exodeoxyribonuclease 7 small subunit (80 aa).

It belongs to the XseB family. In terms of assembly, heterooligomer composed of large and small subunits.

The protein resides in the cytoplasm. It catalyses the reaction Exonucleolytic cleavage in either 5'- to 3'- or 3'- to 5'-direction to yield nucleoside 5'-phosphates.. Its function is as follows. Bidirectionally degrades single-stranded DNA into large acid-insoluble oligonucleotides, which are then degraded further into small acid-soluble oligonucleotides. The polypeptide is Exodeoxyribonuclease 7 small subunit (Streptomyces avermitilis (strain ATCC 31267 / DSM 46492 / JCM 5070 / NBRC 14893 / NCIMB 12804 / NRRL 8165 / MA-4680)).